Reading from the N-terminus, the 452-residue chain is MKETIVAQATAPGRGGIGILRVSGPKAVEVAHTVLGKCPKPRMADYLPFKDSDGNVLDQGIALYFKAPHSFTGEDVLELQGHGGQVVLDLLLKRILQLEGLRLARPGEFSEQAFLNDKLDLAQAEAIADLIDASSEQAARSALKSLQGEFSNKVNQLVDSVIYLRTYVEAAIDFPDEEIDFLADGKIEAHLNDIITQLDHVRSEAKQGSILREGMKVVIAGRPNAGKSSLLNALAGREAAIVTDIAGTTRDVLREHIHIDGMPLHIIDTAGLREATDEVERIGIVRAWSEIEQADRILLMLDSTEADNQDLEKVRSEFLTKLPSNIPVTIVRNKADLSGENEGIVEQNGYTVITLSAKTQQGIALLREHLKQSMGYQTNMEGGFLARRRHLEALEQAATHLQQGHVQLTQFYAGELLAEELRRVQNHLSEITGQFTSDDLLGNIFSSFCIGK.

The (6S)-5-formyl-5,6,7,8-tetrahydrofolate site is built by R21, E78, and K118. Positions 214 to 375 (GMKVVIAGRP…LREHLKQSMG (162 aa)) constitute a TrmE-type G domain. Residue N224 participates in K(+) binding. Residues 224–229 (NAGKSS), 243–249 (TDIAGTT), 268–271 (DTAG), and 333–336 (NKAD) each bind GTP. S228 is a Mg(2+) binding site. Residues T243, I245, and T248 each coordinate K(+). Position 249 (T249) interacts with Mg(2+). K452 contributes to the (6S)-5-formyl-5,6,7,8-tetrahydrofolate binding site.

This sequence belongs to the TRAFAC class TrmE-Era-EngA-EngB-Septin-like GTPase superfamily. TrmE GTPase family. Homodimer. Heterotetramer of two MnmE and two MnmG subunits. K(+) serves as cofactor.

The protein localises to the cytoplasm. Exhibits a very high intrinsic GTPase hydrolysis rate. Involved in the addition of a carboxymethylaminomethyl (cmnm) group at the wobble position (U34) of certain tRNAs, forming tRNA-cmnm(5)s(2)U34. The chain is tRNA modification GTPase MnmE from Pasteurella multocida (strain Pm70).